A 471-amino-acid chain; its full sequence is Mitochondrial distribution and morphology protein 10 (471 aa).

The disordered stretch occupies residues 429–455; sequence PSSFSSPSRAANSTPAGGGQSVGGGIS. Over residues 444 to 455 the composition is skewed to gly residues; sequence AGGGQSVGGGIS.

Belongs to the MDM10 family. In terms of assembly, component of the ER-mitochondria encounter structure (ERMES) or MDM complex, composed of mmm1, mdm10, mdm12 and mdm34. Associates with the mitochondrial outer membrane sorting assembly machinery SAM(core) complex.

The protein localises to the mitochondrion outer membrane. Component of the ERMES/MDM complex, which serves as a molecular tether to connect the endoplasmic reticulum and mitochondria. Components of this complex are involved in the control of mitochondrial shape and protein biogenesis and may function in phospholipid exchange. mdm10 is involved in the late assembly steps of the general translocase of the mitochondrial outer membrane (TOM complex). Functions in the tom40-specific route of the assembly of outer membrane beta-barrel proteins, including the association of tom40 with the receptor tom22 and small TOM proteins. Can associate with the SAM(core) complex as well as the mdm12-mmm1 complex, both involved in late steps of the major beta-barrel assembly pathway, that is responsible for biogenesis of all outer membrane beta-barrel proteins. May act as a switch that shuttles between both complexes and channels precursor proteins into the tom40-specific pathway. Plays a role in mitochondrial morphology and in the inheritance of mitochondria. The protein is Mitochondrial distribution and morphology protein 10 (mdmB) of Aspergillus fumigatus (strain ATCC MYA-4609 / CBS 101355 / FGSC A1100 / Af293) (Neosartorya fumigata).